The primary structure comprises 42 residues: Photosystem I reaction center subunit IX (42 aa).

The chain crosses the membrane as a helical span at residues 7–27 (YLSTAPVLAAIWFAILAGLLI).

It belongs to the PsaJ family.

Its subcellular location is the plastid. The protein localises to the chloroplast thylakoid membrane. May help in the organization of the PsaE and PsaF subunits. The sequence is that of Photosystem I reaction center subunit IX from Zygnema circumcarinatum (Green alga).